The chain runs to 258 residues: Small ribosomal subunit protein mS35 (258 aa).

The transit peptide at 1-39 (MAFNPLLSLLKADAIFLGQLSKSSFCATSRAFSVFYFTR) directs the protein to the mitochondrion.

It belongs to the mitochondrion-specific ribosomal protein mS35 family. As to quaternary structure, component of the mitochondrial small ribosomal subunit (mt-SSU). Mature yeast 74S mitochondrial ribosomes consist of a small (37S) and a large (54S) subunit. The 37S small subunit contains a 15S ribosomal RNA (15S mt-rRNA) and at least 32 different proteins. The 54S large subunit contains a 21S rRNA (21S mt-rRNA) and at least 45 different proteins.

The protein localises to the mitochondrion. Functionally, component of the mitochondrial ribosome (mitoribosome), a dedicated translation machinery responsible for the synthesis of mitochondrial genome-encoded proteins, including at least some of the essential transmembrane subunits of the mitochondrial respiratory chain. The mitoribosomes are attached to the mitochondrial inner membrane and translation products are cotranslationally integrated into the membrane. The protein is Small ribosomal subunit protein mS35 (rsm24) of Schizosaccharomyces pombe (strain 972 / ATCC 24843) (Fission yeast).